The primary structure comprises 362 residues: Very-long-chain (3R)-3-hydroxyacyl-CoA dehydratase (362 aa).

Topologically, residues 1–149 (MADCSLRPHV…DPFKHLKKGY (149 aa)) are cytoplasmic. In terms of domain architecture, CS spans 5 to 94 (SLRPHVHWAQ…KESSWWERLT (90 aa)). The stretch at 111–135 (LDESDAEMELKEKEEEKINKMKIES) forms a coiled coil. A helical membrane pass occupies residues 150–170 (LIMYNLVQFLGFSWIFVNMTV). At 171 to 189 (RLFILGKDSFYDTFHTIAD) the chain is on the lumenal side. A helical transmembrane segment spans residues 190–210 (MMYFCQTLALMEILNSLIGLV). The Cytoplasmic portion of the chain corresponds to 211–212 (RS). Residues 213–233 (PLIPAVIQVFGRNFILFVVLG) traverse the membrane as a helical segment. At 234–242 (SLEEMQSKA) the chain is on the lumenal side. Residues 243-263 (VVFFLFYFWSIIELFRYPYYM) traverse the membrane as a helical segment. The Cytoplasmic segment spans residues 264-282 (LSCMGIEWKPLTWLRYTSW). A helical membrane pass occupies residues 283–303 (IPLYPLGGLAEAVCLIQSIPI). Catalysis depends on residues Tyr286 and Glu293. Residues 304–319 (FSETGKFSLGLPNPLN) are Lumenal-facing. A helical transmembrane segment spans residues 320–340 (VTIQFSFLLQMYLIALFLGLF). Topologically, residues 341–362 (VNFRYLYKQRKQHLGPKKRKMK) are cytoplasmic.

This sequence belongs to the very long-chain fatty acids dehydratase HACD family.

Its subcellular location is the endoplasmic reticulum membrane. It carries out the reaction a very-long-chain (3R)-3-hydroxyacyl-CoA = a very-long-chain (2E)-enoyl-CoA + H2O. It catalyses the reaction (3R)-hydroxyhexadecanoyl-CoA = (2E)-hexadecenoyl-CoA + H2O. It functions in the pathway lipid metabolism; fatty acid biosynthesis. Catalyzes the third of the four reactions of the long-chain fatty acids elongation cycle. This endoplasmic reticulum-bound enzymatic process, allows the addition of two carbons to the chain of long- and very long-chain fatty acids/VLCFAs per cycle. This enzyme catalyzes the dehydration of the 3-hydroxyacyl-CoA intermediate into trans-2,3-enoyl-CoA, within each cycle of fatty acid elongation. Thereby, it participates in the production of VLCFAs of different chain lengths that are involved in multiple biological processes as precursors of membrane lipids and lipid mediators. Involved in Rac1-signaling pathways leading to the modulation of gene expression. In Gallus gallus (Chicken), this protein is Very-long-chain (3R)-3-hydroxyacyl-CoA dehydratase.